Here is a 364-residue protein sequence, read N- to C-terminus: MKVGDRHYHTIWLNEDGRSVDIIDQRWLPHDLRVVTLKTVADVALAIRDMWVRGAPLIGVTAAYGVAIAMTKDPSDAHLDAVWDELHQTRPTAINLRWALDAMRDHLRPLPEAGRADAAYQRATEIAEEDIELNRAIGANGLKVIRQIAAKKKPGEPVRILTHCNAGWLATVDYGTATAPIYMAVEEGIPVHVYVDETRPRNQGAYLTAWEMSSHGVPHTLIVDNAGGHLMQHGDVDLVIVGTDRTTANGDVCNKIGTYLKALAARDNGVPFYVALPSPTIDWTVHDGVKEIPIEERPGDEVSFVQGRASDGSIASVRISPEGSPAANPAFDVTPARLITGLITERGIATPSPEGLKALFPERR.

Substrate-binding positions include 53–55 (RGA), Arg-90, and Gln-203. Asp-244 functions as the Proton donor in the catalytic mechanism. Position 254–255 (254–255 (NK)) interacts with substrate.

The protein belongs to the eIF-2B alpha/beta/delta subunits family. MtnA subfamily.

It carries out the reaction 5-(methylsulfanyl)-alpha-D-ribose 1-phosphate = 5-(methylsulfanyl)-D-ribulose 1-phosphate. It functions in the pathway amino-acid biosynthesis; L-methionine biosynthesis via salvage pathway; L-methionine from S-methyl-5-thio-alpha-D-ribose 1-phosphate: step 1/6. In terms of biological role, catalyzes the interconversion of methylthioribose-1-phosphate (MTR-1-P) into methylthioribulose-1-phosphate (MTRu-1-P). The polypeptide is Methylthioribose-1-phosphate isomerase (Rhizobium meliloti (strain 1021) (Ensifer meliloti)).